Reading from the N-terminus, the 462-residue chain is Ketoisovalerate reductase (462 aa).

The disordered stretch occupies residues 34–55 (PTAVKPDRADRGDFDPGKYPVD). Over residues 38 to 49 (KPDRADRGDFDP) the composition is skewed to basic and acidic residues. NADP(+) is bound at residue 72 to 77 (GPGNVG). The short motif at 167–184 (ADRLRRYLGRCSSVVFAQ) is the Calmoduling-binding element. The active-site Proton donor is K290. N294, N298, and S403 together coordinate substrate. NADP(+) is bound at residue E415.

This sequence belongs to the ketopantoate reductase family. Homodimer. Binds to calmodulin in a calcium-independent manner.

It catalyses the reaction (R)-2-hydroxy-3-methylbutanoate + NADP(+) = 3-methyl-2-oxobutanoate + NADPH + H(+). Environmental stimuli such as light and salt stress suppress activity through stimulation of calmodulin (CaM) that binds BEA2 and probably impairs its dimerization. Its function is as follows. Ketoisovalerate reductase; part of the gene cluster that mediates the biosynthesis of beauvericin (BEA), a non-ribosomal cyclic hexadepsipeptide that shows antibiotic, antifungal, insecticidal, and cancer cell antiproliferative and antihaptotactic activity. Ketoisovalerate reductase BEA2 catalyzes the NADPH-specific reduction of ketoisovaleric acid to hydroxyisovalerate, a precursor for beauvericin biosynthesis. The nonribosomal cyclodepsipeptide synthetase BEA1 then catalyzes the formation of beauvericin via condensation and cyclization of 3 dipeptidol monomers, each composed of one unit of hydroxyisovalerate and one unit of N-methyl-phenylalanine. This is Ketoisovalerate reductase from Beauveria bassiana (White muscardine disease fungus).